Consider the following 587-residue polypeptide: DELLA protein RGA (587 aa).

A disordered region spans residues 1 to 26 (MKRDHHQFQGRLSNHGTSSSSSSISK). Positions 44-48 (DELLA) match the DELLA motif motif. The LEXLE motif motif lies at 66 to 70 (LEQLE). A VHYNP motif motif is present at residues 89–93 (VHYNP). The segment at 152 to 181 (IDSSSSSNNQNKRLKSCSSPDSMVTSTSTG) is disordered. Positions 153–175 (DSSSSSNNQNKRLKSCSSPDSMV) are enriched in polar residues. Residues 212–581 (VDSQENGVRL…RPLITTSAWK (370 aa)) enclose the GRAS domain. The segment at 219–273 (VRLVHALMACAEAIQQNNLTLAEALVKQIGCLAVSQAGAMRKVATYFAEALARRI) is leucine repeat I (LRI). The segment at 292-357 (QMHFYETCPY…GGPPTFRLTG (66 aa)) is VHIID. Residues 323–327 (VHVID) carry the VHIID motif. Residues 371–403 (EVGCKLAQLAEAIHVEFEYRGFVANSLADLDAS) are leucine repeat II (LRII). The segment at 415–502 (VAVNSVFELH…EVYLGKQICN (88 aa)) is PFYRE. An LXXLL motif motif is present at residues 423 to 427 (LHKLL). Residues 505-581 (ACEGPDRVER…RPLITTSAWK (77 aa)) form an SAW region.

Belongs to the GRAS family. DELLA subfamily. In terms of assembly, interacts directly with the GID2/SLY1 component of the SCF(GID2) complex. Interacts (via N-terminus) with GID1A, GID1B and GID1B (via N-terminus). Binds to bHLH transcription factors such as MYC2, PIF1, PIF4, PIF6 and SPT. Interacts with the BOI proteins BOI, BRG1, BRG2 and BRG3. Interacts with NFYC9. Interacts with TOPP4. Interacts with FLZ5. Binds to zinc finger proteins MGP/IDD3, IDD4, IDD5, BIB/IDD9 and JKD/IDD10 in the nucleus. Binds to and coactivates GAF1/IDD2 and ENY/IDD1. Binds to PDF2 and ATML1. In terms of processing, phosphorylated. Phosphorylation may increase the interaction with GID2. Gibberellin (GA) induces dephosphorylation of RGA by TOPP4 and subsequent degradation by the proteasomal pathway. Post-translationally, ubiquitinated. Upon GA application it is ubiquitinated by the SCF(GID2) complex, leading to its subsequent degradation. In terms of processing, O-fucosylated by SPY. O-fucosylation enhances RGA activity by promoting RGA binding to key transcription factors in brassinosteroid and light signaling pathways. As to expression, ubiquitously expressed. Expressed in roots, rosette leaves, bolting and mature stems, young and mature siliques, flower buds and influorescences.

It is found in the nucleus. Functionally, probable transcriptional regulator that acts as a repressor of the gibberellin (GA) signaling pathway. Probably acts by participating in large multiprotein complexes that repress transcription of GA-inducible genes. Positively regulates XERICO expression in seeds. Upon GA application, it is degraded by the proteasome, allowing the GA signaling pathway. Compared to other DELLA proteins, it is the most sensitive to GA application. No effect of the BOI proteins on its stability. Its activity is probably regulated by other phytohormones such as auxin and ethylene, attenuation of auxin transport delaying its GA-induced degradation. Involved in the regulation of seed dormancy and germination, including glucose-induced delay of seed germination. The chain is DELLA protein RGA from Arabidopsis thaliana (Mouse-ear cress).